The sequence spans 954 residues: Valine--tRNA ligase (954 aa).

Positions 48–58 (PNVTGSLHMGH) match the 'HIGH' region motif. The 'KMSKS' region motif lies at 560 to 564 (KMSKS). Lysine 563 lines the ATP pocket. A coiled-coil region spans residues 886-954 (INKDTELARL…RAQYLSIENL (69 aa)).

It belongs to the class-I aminoacyl-tRNA synthetase family. ValS type 1 subfamily. Monomer.

It is found in the cytoplasm. It carries out the reaction tRNA(Val) + L-valine + ATP = L-valyl-tRNA(Val) + AMP + diphosphate. Catalyzes the attachment of valine to tRNA(Val). As ValRS can inadvertently accommodate and process structurally similar amino acids such as threonine, to avoid such errors, it has a 'posttransfer' editing activity that hydrolyzes mischarged Thr-tRNA(Val) in a tRNA-dependent manner. The protein is Valine--tRNA ligase of Mannheimia succiniciproducens (strain KCTC 0769BP / MBEL55E).